Here is a 75-residue protein sequence, read N- to C-terminus: Sec-independent protein translocase protein TatA (75 aa).

The helical transmembrane segment at 1 to 21 threads the bilayer; the sequence is MFGLSPAQLIILLVVILLIFG.

The protein belongs to the TatA/E family. The Tat system comprises two distinct complexes: a TatABC complex, containing multiple copies of TatA, TatB and TatC subunits, and a separate TatA complex, containing only TatA subunits. Substrates initially bind to the TatABC complex, which probably triggers association of the separate TatA complex to form the active translocon.

The protein resides in the cell inner membrane. In terms of biological role, part of the twin-arginine translocation (Tat) system that transports large folded proteins containing a characteristic twin-arginine motif in their signal peptide across membranes. TatA could form the protein-conducting channel of the Tat system. This chain is Sec-independent protein translocase protein TatA, found in Haemophilus influenzae (strain PittEE).